A 269-amino-acid polypeptide reads, in one-letter code: Formamidopyrimidine-DNA glycosylase (269 aa).

The Schiff-base intermediate with DNA role is filled by proline 2. Glutamate 3 functions as the Proton donor in the catalytic mechanism. Lysine 57 (proton donor; for beta-elimination activity) is an active-site residue. 3 residues coordinate DNA: histidine 90, arginine 109, and lysine 150. The segment at 235–269 (QVYGRGGEPCRVCGTPIQMAKHGQRSTFFCPACQH) adopts an FPG-type zinc-finger fold. Catalysis depends on arginine 259, which acts as the Proton donor; for delta-elimination activity.

This sequence belongs to the FPG family. As to quaternary structure, monomer. Zn(2+) serves as cofactor.

The enzyme catalyses Hydrolysis of DNA containing ring-opened 7-methylguanine residues, releasing 2,6-diamino-4-hydroxy-5-(N-methyl)formamidopyrimidine.. The catalysed reaction is 2'-deoxyribonucleotide-(2'-deoxyribose 5'-phosphate)-2'-deoxyribonucleotide-DNA = a 3'-end 2'-deoxyribonucleotide-(2,3-dehydro-2,3-deoxyribose 5'-phosphate)-DNA + a 5'-end 5'-phospho-2'-deoxyribonucleoside-DNA + H(+). Its function is as follows. Involved in base excision repair of DNA damaged by oxidation or by mutagenic agents. Acts as a DNA glycosylase that recognizes and removes damaged bases. Has a preference for oxidized purines, such as 7,8-dihydro-8-oxoguanine (8-oxoG). Has AP (apurinic/apyrimidinic) lyase activity and introduces nicks in the DNA strand. Cleaves the DNA backbone by beta-delta elimination to generate a single-strand break at the site of the removed base with both 3'- and 5'-phosphates. The polypeptide is Formamidopyrimidine-DNA glycosylase (Sodalis glossinidius (strain morsitans)).